The primary structure comprises 1238 residues: uncharacterized protein (1238 aa).

Disordered regions lie at residues 1 to 38 (MSSK…DISS), 122 to 156 (SSTP…RPSF), 229 to 439 (PKNN…KNKE), 660 to 1016 (KNKL…TGAA), 1051 to 1083 (EEED…KLNS), and 1098 to 1191 (KKSG…NASR). Low complexity-rich tracts occupy residues 10–26 (NKNN…NNNN), 129–149 (LSPF…QSPL), and 234–276 (QIDS…TQSQ). The span at 317–343 (ELQNQTQINKSKQDLTNISQKINITTS) shows a compositional bias: polar residues. A compositionally biased stretch (basic and acidic residues) spans 344 to 361 (QHDKDDLGEYRMSEKGGG). Residues 362–372 (DDGDDDDDYDN) are compositionally biased toward acidic residues. Residues 383–394 (TNKKQQQQHHHK) are compositionally biased toward basic residues. The span at 395–416 (GKEESQSEYYEKEKEKEKEDIA) shows a compositional bias: basic and acidic residues. 3 stretches are compositionally biased toward low complexity: residues 417-435 (TTRA…NNIN), 678-691 (QQQQ…QQQE), and 712-792 (QPSQ…QEKQ). The span at 793 to 805 (QSQEKHQSQEKHQ) shows a compositional bias: basic and acidic residues. Composition is skewed to low complexity over residues 806–859 (SQQS…SQQK) and 882–906 (SQSQ…QSQR). Positions 916 to 927 (ENQDSENLDDTV) are enriched in acidic residues. Polar residues predominate over residues 929-944 (MNYNQIPSTLDHSTLQ). Residues 966–975 (EIERRRRELA) are compositionally biased toward basic and acidic residues. Positions 976–990 (GEDSDEEFEILDEDQ) are enriched in acidic residues. Composition is skewed to low complexity over residues 1062 to 1083 (QNNN…KLNS) and 1108 to 1121 (SSSS…NKKN). A compositionally biased stretch (polar residues) spans 1123–1133 (PQPTKSVNKPR). Residues 1142–1181 (SQNRQKQSEQQQQQPQQQPQLPQQQQQQQQQQQLRQQQNE) show a composition bias toward low complexity. Over residues 1182–1191 (NTISSLNASR) the composition is skewed to polar residues.

This is an uncharacterized protein from Dictyostelium discoideum (Social amoeba).